Consider the following 226-residue polypeptide: Thymidylate kinase (226 aa).

ATP is bound at residue 20 to 27 (GGEGAGKS).

This sequence belongs to the thymidylate kinase family.

The enzyme catalyses dTMP + ATP = dTDP + ADP. Its function is as follows. Phosphorylation of dTMP to form dTDP in both de novo and salvage pathways of dTTP synthesis. The polypeptide is Thymidylate kinase (Bradyrhizobium sp. (strain ORS 278)).